The following is an 82-amino-acid chain: Cytochrome b559 subunit alpha (82 aa).

The helical transmembrane segment at 22-36 (VIHAITLPSIFLAGF) threads the bilayer. A heme-binding site is contributed by H24.

Belongs to the PsbE/PsbF family. As to quaternary structure, heterodimer of an alpha subunit and a beta subunit. PSII is composed of 1 copy each of membrane proteins PsbA, PsbB, PsbC, PsbD, PsbE, PsbF, PsbH, PsbI, PsbJ, PsbK, PsbL, PsbM, PsbT, PsbX, PsbY, PsbZ, Psb30/Ycf12, peripheral proteins PsbO, CyanoQ (PsbQ), PsbU, PsbV and a large number of cofactors. It forms dimeric complexes. Heme b serves as cofactor.

The protein resides in the cellular thylakoid membrane. Its function is as follows. This b-type cytochrome is tightly associated with the reaction center of photosystem II (PSII). PSII is a light-driven water:plastoquinone oxidoreductase that uses light energy to abstract electrons from H(2)O, generating O(2) and a proton gradient subsequently used for ATP formation. It consists of a core antenna complex that captures photons, and an electron transfer chain that converts photonic excitation into a charge separation. This is Cytochrome b559 subunit alpha from Synechococcus sp. (strain WH7803).